The primary structure comprises 195 residues: Imidazoleglycerol-phosphate dehydratase (195 aa).

The protein belongs to the imidazoleglycerol-phosphate dehydratase family.

Its subcellular location is the cytoplasm. The enzyme catalyses D-erythro-1-(imidazol-4-yl)glycerol 3-phosphate = 3-(imidazol-4-yl)-2-oxopropyl phosphate + H2O. It participates in amino-acid biosynthesis; L-histidine biosynthesis; L-histidine from 5-phospho-alpha-D-ribose 1-diphosphate: step 6/9. The chain is Imidazoleglycerol-phosphate dehydratase from Thermotoga petrophila (strain ATCC BAA-488 / DSM 13995 / JCM 10881 / RKU-1).